Reading from the N-terminus, the 164-residue chain is Transcription antitermination protein NusB (164 aa).

Positions 144–164 are disordered; the sequence is KNGRGLIDHTPPRAAKTDAKS. Residues 149-164 are compositionally biased toward basic and acidic residues; the sequence is LIDHTPPRAAKTDAKS.

The protein belongs to the NusB family.

In terms of biological role, involved in transcription antitermination. Required for transcription of ribosomal RNA (rRNA) genes. Binds specifically to the boxA antiterminator sequence of the ribosomal RNA (rrn) operons. The chain is Transcription antitermination protein NusB from Chlorobium phaeovibrioides (strain DSM 265 / 1930) (Prosthecochloris vibrioformis (strain DSM 265)).